A 290-amino-acid chain; its full sequence is Acetylglutamate kinase (290 aa).

Substrate contacts are provided by residues 65 to 66 (GG), Arg-87, and Asn-186.

This sequence belongs to the acetylglutamate kinase family. ArgB subfamily.

The protein resides in the cytoplasm. The catalysed reaction is N-acetyl-L-glutamate + ATP = N-acetyl-L-glutamyl 5-phosphate + ADP. The protein operates within amino-acid biosynthesis; L-arginine biosynthesis; N(2)-acetyl-L-ornithine from L-glutamate: step 2/4. Functionally, catalyzes the ATP-dependent phosphorylation of N-acetyl-L-glutamate. The sequence is that of Acetylglutamate kinase from Mycobacterium sp. (strain JLS).